The primary structure comprises 426 residues: Putative nickel insertion protein (426 aa).

This sequence belongs to the LarC family.

This is Putative nickel insertion protein from Nostoc sp. (strain PCC 7120 / SAG 25.82 / UTEX 2576).